Consider the following 323-residue polypeptide: Ribokinase (323 aa).

Substrate contacts are provided by residues 26-28, 54-58, and Glu155; these read MTD and GKGAN. ATP contacts are provided by residues Asn200, 236 to 241, and Thr257; that span reads TLGASG. Positions 264 and 266 each coordinate K(+). Residues 269–270 and Asn296 each bind ATP; that span reads GD. Asp270 contributes to the substrate binding site. The active-site Proton acceptor is Asp270. K(+) is bound by residues Ser302, Ala305, Gly307, and Ser311.

Belongs to the carbohydrate kinase PfkB family. Ribokinase subfamily. Homodimer. Requires Mg(2+) as cofactor.

It localises to the cytoplasm. Its subcellular location is the nucleus. It carries out the reaction D-ribose + ATP = D-ribose 5-phosphate + ADP + H(+). It functions in the pathway carbohydrate metabolism; D-ribose degradation; D-ribose 5-phosphate from beta-D-ribopyranose: step 2/2. Its activity is regulated as follows. Activated by a monovalent cation that binds near, but not in, the active site. The most likely occupant of the site in vivo is potassium. Ion binding induces a conformational change that may alter substrate affinity. Competitively inhibited by phosphonoacetic acid, etidronate, 2-carboxethylphosphonic acid, N-(phosphonomethyl)glycine, N-(phosphonomethyl)iminodiacetic acid and clodronate. Functionally, catalyzes the phosphorylation of ribose at O-5 in a reaction requiring ATP and magnesium. The resulting D-ribose-5-phosphate can then be used either for sythesis of nucleotides, histidine, and tryptophan, or as a component of the pentose phosphate pathway. The sequence is that of Ribokinase from Mus musculus (Mouse).